A 262-amino-acid chain; its full sequence is Phosphoribosylformylglycinamidine synthase subunit PurQ (262 aa).

The Glutamine amidotransferase type-1 domain maps to R2–P238. The active-site Nucleophile is C87. Active-site residues include H223 and E225.

As to quaternary structure, part of the FGAM synthase complex composed of 1 PurL, 1 PurQ and 2 PurS subunits.

The protein localises to the cytoplasm. It carries out the reaction N(2)-formyl-N(1)-(5-phospho-beta-D-ribosyl)glycinamide + L-glutamine + ATP + H2O = 2-formamido-N(1)-(5-O-phospho-beta-D-ribosyl)acetamidine + L-glutamate + ADP + phosphate + H(+). It catalyses the reaction L-glutamine + H2O = L-glutamate + NH4(+). It participates in purine metabolism; IMP biosynthesis via de novo pathway; 5-amino-1-(5-phospho-D-ribosyl)imidazole from N(2)-formyl-N(1)-(5-phospho-D-ribosyl)glycinamide: step 1/2. Functionally, part of the phosphoribosylformylglycinamidine synthase complex involved in the purines biosynthetic pathway. Catalyzes the ATP-dependent conversion of formylglycinamide ribonucleotide (FGAR) and glutamine to yield formylglycinamidine ribonucleotide (FGAM) and glutamate. The FGAM synthase complex is composed of three subunits. PurQ produces an ammonia molecule by converting glutamine to glutamate. PurL transfers the ammonia molecule to FGAR to form FGAM in an ATP-dependent manner. PurS interacts with PurQ and PurL and is thought to assist in the transfer of the ammonia molecule from PurQ to PurL. The protein is Phosphoribosylformylglycinamidine synthase subunit PurQ of Methanothrix thermoacetophila (strain DSM 6194 / JCM 14653 / NBRC 101360 / PT) (Methanosaeta thermophila).